Reading from the N-terminus, the 261-residue chain is Histone H1-I (261 aa).

Low complexity predominate over residues 1–22 (MSETEAAPVVAPAAEAAPAAEA). Disordered regions lie at residues 1 to 63 (MSET…PPYI) and 125 to 261 (FKLS…KGKK). The span at 41–50 (APKEPKAPKE) shows a compositional bias: basic and acidic residues. The H15 domain occupies 58–129 (THPPYIEMVK…KVKGSFKLSE (72 aa)). Over residues 133-142 (AKAKKSTPKK) the composition is skewed to basic residues. 2 tandem repeats follow at residues 136 to 140 (KKSTP) and 188 to 192 (KKATP). The segment at 136 to 250 (KKSTPKKAKA…KKAPAKKSTP (115 aa)) is 7 X 5 AA repeats of K-K-[AS]-T-P. The DNA-binding element occupies 139-142 (TPKK). The segment covering 143–198 (AKADGEAKPKKSEAKPKKAEAVKKTKAPKEKVERPKKEKKEKVEKKKATPKAEKPK) has biased composition (basic and acidic residues). A 3; approximate repeat occupies 199 to 203 (KAATP). A run of 4 repeats spans residues 209-213 (KKATP), 230-234 (KKATP), 236-240 (KKAAP), and 246-250 (KKSTP). A compositionally biased stretch (basic residues) spans 227 to 250 (AKPKKATPSKKAAPKKAPAKKSTP). Basic and acidic residues predominate over residues 251-261 (KAKEAKSKGKK).

The protein belongs to the histone H1/H5 family.

Its subcellular location is the nucleus. It is found in the chromosome. Histones H1 are necessary for the condensation of nucleosome chains into higher-order structures. The protein is Histone H1-I (H1-I) of Volvox carteri (Green alga).